Reading from the N-terminus, the 178-residue chain is UPF0302 protein Bcer98_1244 (178 aa).

The protein belongs to the UPF0302 family.

This Bacillus cytotoxicus (strain DSM 22905 / CIP 110041 / 391-98 / NVH 391-98) protein is UPF0302 protein Bcer98_1244.